Here is a 617-residue protein sequence, read N- to C-terminus: Protein 4.1 (617 aa).

In terms of domain architecture, FERM spans 1-282 (MHCKVSLLDD…EHHTFFRLTS (282 aa)). Y13 is subject to Phosphotyrosine. The residue at position 169 (T169) is a Phosphothreonine. Residues 308–401 (TRQASALIDR…AEPEPSEAWK (94 aa)) form a disordered region. A phosphoserine mark is found at S312, S331, and S333. The segment covering 348 to 361 (RPTSAPAIAPSPAA) has biased composition (low complexity). Residues 387-396 (APPEDAEPEP) show a composition bias toward acidic residues. Residues 401–466 (KKKRERLDGE…WDKRLSTHSP (66 aa)) form a spectrin--actin-binding region. Phosphotyrosine; by EGFR is present on Y413. A phosphoserine mark is found at S417, S427, S437, and S462. At S465 the chain carries Phosphoserine; by CDK1. The segment at 467 to 617 (FRTLNINGQI…VHQETEISEE (151 aa)) is C-terminal (CTD). T489 and T612 each carry phosphothreonine.

In terms of assembly, binds with a high affinity to glycophorin and with lower affinity to band III protein. Associates with the nuclear mitotic apparatus. Binds calmodulin, CPAP and DLG1. Also found to associate with contractile apparatus and tight junctions. Interacts with NUMA1; this interaction is negatively regulated by CDK1 during metaphase and promotes anaphase-specific localization of NUMA1 in symmetrically dividing cells. Interacts with ATP2B1; regulates small intestinal calcium absorption through regulation of membrane expression of ATP2B1. Phosphorylated at multiple sites by different protein kinases and each phosphorylation event selectively modulates the protein's functions. In terms of processing, phosphorylation on Tyr-413 reduces the ability of 4.1 to promote the assembly of the spectrin/actin/4.1 ternary complex.

It is found in the nucleus. It localises to the cytoplasm. The protein localises to the cytoskeleton. Its subcellular location is the cell cortex. Functionally, protein 4.1 is a major structural element of the erythrocyte membrane skeleton. It plays a key role in regulating membrane physical properties of mechanical stability and deformability by stabilizing spectrin-actin interaction. Recruits DLG1 to membranes. Required for dynein-dynactin complex and NUMA1 recruitment at the mitotic cell cortex during anaphase. The polypeptide is Protein 4.1 (Bos taurus (Bovine)).